Here is a 338-residue protein sequence, read N- to C-terminus: Putative ankyrin repeat protein CBU_0781 (338 aa).

The tract at residues 1-31 (MSRRETPTSTISSTPTGTRTPRRRLSRKGHP) is disordered. Positions 7–19 (PTSTISSTPTGTR) are enriched in low complexity. The span at 20-31 (TPRRRLSRKGHP) shows a compositional bias: basic residues. ANK repeat units lie at residues 92–124 (QGDT…IVNK) and 125–157 (LGET…IKYK). Residues 197–242 (SQIMASDKEIDEIIRNARNLQIIKKEKREAEERARTKKSKQITLQR) adopt a coiled-coil conformation. The interval 319–338 (KKEDTTLSRNNSLSCLSSPR) is disordered. A compositionally biased stretch (low complexity) spans 325–338 (LSRNNSLSCLSSPR).

The polypeptide is Putative ankyrin repeat protein CBU_0781 (Coxiella burnetii (strain RSA 493 / Nine Mile phase I)).